The primary structure comprises 364 residues: DNA replication and repair protein RecF (364 aa).

An ATP-binding site is contributed by 30 to 37; it reads GENGSGKT.

The protein belongs to the RecF family.

Its subcellular location is the cytoplasm. In terms of biological role, the RecF protein is involved in DNA metabolism; it is required for DNA replication and normal SOS inducibility. RecF binds preferentially to single-stranded, linear DNA. It also seems to bind ATP. The sequence is that of DNA replication and repair protein RecF from Pseudoalteromonas translucida (strain TAC 125).